Here is a 342-residue protein sequence, read N- to C-terminus: L-threonine 3-dehydrogenase (342 aa).

A Zn(2+)-binding site is contributed by Cys38. Catalysis depends on charge relay system residues Thr40 and His43. The Zn(2+) site is built by His63, Glu64, Cys93, Cys96, Cys99, and Cys107. NAD(+)-binding positions include Ile175, Asp195, Arg200, 262–264 (LGI), and 286–287 (IY).

The protein belongs to the zinc-containing alcohol dehydrogenase family. Homotetramer. Zn(2+) serves as cofactor.

It is found in the cytoplasm. It catalyses the reaction L-threonine + NAD(+) = (2S)-2-amino-3-oxobutanoate + NADH + H(+). The protein operates within amino-acid degradation; L-threonine degradation via oxydo-reductase pathway; glycine from L-threonine: step 1/2. Functionally, catalyzes the NAD(+)-dependent oxidation of L-threonine to 2-amino-3-ketobutyrate. The sequence is that of L-threonine 3-dehydrogenase from Burkholderia multivorans (strain ATCC 17616 / 249).